The primary structure comprises 470 residues: Neuraminidase (470 aa).

Topologically, residues 1–6 are intravirion; it reads MNPNQK. A helical transmembrane segment spans residues 7–29; the sequence is IITIGSVSIVLTTVGLLLQITSL. Positions 11–33 are involved in apical transport and lipid raft association; the sequence is GSVSIVLTTVGLLLQITSLCSIW. The Virion surface portion of the chain corresponds to 30–470; the sequence is CSIWFSHYNQ…GALLPFDIDK (441 aa). Positions 36 to 88 are hypervariable stalk region; it reads HYNQVTQTNGQPCSNDTINYYNETFVNVTNVQNNYTTITEPSIPQAIHYSSGR. N-linked (GlcNAc...) asparagine; by host glycans are attached at residues asparagine 50, asparagine 57, asparagine 62, and asparagine 69. The head of neuraminidase stretch occupies residues 90-470; that stretch reads LCPVKGWAPL…GALLPFDIDK (381 aa). Cystine bridges form between cysteine 91–cysteine 418, cysteine 123–cysteine 128, cysteine 183–cysteine 230, cysteine 232–cysteine 237, cysteine 278–cysteine 291, cysteine 280–cysteine 289, cysteine 317–cysteine 334, and cysteine 422–cysteine 447. Residue arginine 117 coordinates substrate. N-linked (GlcNAc...) asparagine; by host glycosylation occurs at asparagine 145. Aspartate 150 serves as the catalytic Proton donor/acceptor. Arginine 151 contacts substrate. 276–277 contacts substrate; it reads EE. Residue arginine 292 coordinates substrate. Positions 293, 297, and 323 each coordinate Ca(2+). Arginine 369 lines the substrate pocket. Asparagine 399 carries N-linked (GlcNAc...) asparagine; by host glycosylation. The Nucleophile role is filled by tyrosine 403. The N-linked (GlcNAc...) asparagine; by host glycan is linked to asparagine 417.

It belongs to the glycosyl hydrolase 34 family. As to quaternary structure, homotetramer. Ca(2+) serves as cofactor. Post-translationally, N-glycosylated.

Its subcellular location is the virion membrane. It is found in the host apical cell membrane. It carries out the reaction Hydrolysis of alpha-(2-&gt;3)-, alpha-(2-&gt;6)-, alpha-(2-&gt;8)- glycosidic linkages of terminal sialic acid residues in oligosaccharides, glycoproteins, glycolipids, colominic acid and synthetic substrates.. Inhibited by the neuraminidase inhibitors zanamivir (Relenza) and oseltamivir (Tamiflu). These drugs interfere with the release of progeny virus from infected cells and are effective against all influenza strains. Resistance to neuraminidase inhibitors is quite rare. In terms of biological role, catalyzes the removal of terminal sialic acid residues from viral and cellular glycoconjugates. Cleaves off the terminal sialic acids on the glycosylated HA during virus budding to facilitate virus release. Additionally helps virus spread through the circulation by further removing sialic acids from the cell surface. These cleavages prevent self-aggregation and ensure the efficient spread of the progeny virus from cell to cell. Otherwise, infection would be limited to one round of replication. Described as a receptor-destroying enzyme because it cleaves a terminal sialic acid from the cellular receptors. May facilitate viral invasion of the upper airways by cleaving the sialic acid moieties on the mucin of the airway epithelial cells. Likely to plays a role in the budding process through its association with lipid rafts during intracellular transport. May additionally display a raft-association independent effect on budding. Plays a role in the determination of host range restriction on replication and virulence. Sialidase activity in late endosome/lysosome traffic seems to enhance virus replication. The sequence is that of Neuraminidase from Aves.